Here is a 366-residue protein sequence, read N- to C-terminus: Ribosomal RNA large subunit methyltransferase M (366 aa).

S-adenosyl-L-methionine contacts are provided by residues Ser-188, 221-224 (CPGG), Asp-240, Asp-260, and Asp-277. The active-site Proton acceptor is Lys-306.

The protein belongs to the class I-like SAM-binding methyltransferase superfamily. RNA methyltransferase RlmE family. RlmM subfamily. As to quaternary structure, monomer.

It is found in the cytoplasm. The catalysed reaction is cytidine(2498) in 23S rRNA + S-adenosyl-L-methionine = 2'-O-methylcytidine(2498) in 23S rRNA + S-adenosyl-L-homocysteine + H(+). Its function is as follows. Catalyzes the 2'-O-methylation at nucleotide C2498 in 23S rRNA. The sequence is that of Ribosomal RNA large subunit methyltransferase M from Klebsiella pneumoniae (strain 342).